Here is a 476-residue protein sequence, read N- to C-terminus: Cysteine--tRNA ligase (476 aa).

Position 27 (cysteine 27) interacts with Zn(2+). Positions 29–39 (ITPYDSVHVGH) match the 'HIGH' region motif. The Zn(2+) site is built by cysteine 213, histidine 238, and glutamate 242. A 'KMSKS' region motif is present at residues 271–275 (KMSKS). Residue lysine 274 coordinates ATP.

Belongs to the class-I aminoacyl-tRNA synthetase family. Requires Zn(2+) as cofactor.

The protein resides in the cytoplasm. The catalysed reaction is tRNA(Cys) + L-cysteine + ATP = L-cysteinyl-tRNA(Cys) + AMP + diphosphate. This is Cysteine--tRNA ligase from Pyrobaculum arsenaticum (strain DSM 13514 / JCM 11321 / PZ6).